A 533-amino-acid polypeptide reads, in one-letter code: Fimbrial subunit type 1 (533 aa).

The signal sequence occupies residues 1 to 30 (MHSLNTRRGLGLAAAMTLAAGALVAPTGAA). Positions 496–500 (LPLTG) match the LPXTG sorting signal motif. Thr-499 is modified (pentaglycyl murein peptidoglycan amidated threonine). Residues 500-533 (GANGVIFLTIAGALLVAGGAVVAYANKRRHVAKH) constitute a propeptide, removed by sortase.

It localises to the secreted. The protein resides in the cell wall. Its subcellular location is the fimbrium. Its function is as follows. Major fimbrial subunit of A.viscosus. The polypeptide is Fimbrial subunit type 1 (Actinomyces viscosus).